Here is a 164-residue protein sequence, read N- to C-terminus: Interleukin-36 beta (164 aa).

The propeptide occupies 1 to 4; sequence MNPQ.

The protein belongs to the IL-1 family. As to quaternary structure, interacts with cargo receptor TMED10; the interaction mediates the translocation from the cytoplasm into the ERGIC (endoplasmic reticulum-Golgi intermediate compartment) and thereby secretion. Post-translationally, N-terminal truncation leads to a dramatic enhancement of its activity (&gt;1000-fold). Expression at low levels in tonsil, bone marrow, heart, placenta, lung, testis and colon but not in any hematopoietic cell lines. Not detected in adipose tissue. Expressed at higher levels in psoriatic plaques than in symptomless psoriatic skin or healthy control skin. Increased levels are not detected in inflamed joint tissue.

The protein resides in the cytoplasm. The protein localises to the secreted. Functionally, cytokine that binds to and signals through the IL1RL2/IL-36R receptor which in turn activates NF-kappa-B and MAPK signaling pathways in target cells linked to a pro-inflammatory response. Part of the IL-36 signaling system that is thought to be present in epithelial barriers and to take part in local inflammatory response; similar to the IL-1 system with which it shares the coreceptor IL1RAP. Stimulates production of interleukin-6 and interleukin-8 in synovial fibrobasts, articular chondrocytes and mature adipocytes. Induces expression of a number of antimicrobial peptides including beta-defensins 4 and 103 as well as a number of matrix metalloproteases. Seems to be involved in skin inflammatory response by acting on keratinocytes, dendritic cells and indirectly on T-cells to drive tissue infiltration, cell maturation and cell proliferation. In cultured keratinocytes induces the expression of macrophage, T-cell, and neutrophil chemokines, such as CCL3, CCL4, CCL5, CCL2, CCL17, CCL22, CL20, CCL5, CCL2, CCL17, CCL22, CXCL8, CCL20 and CXCL1, and the production of pro-inflammatory cytokines such as TNF-alpha, IL-8 and IL-6. The polypeptide is Interleukin-36 beta (Homo sapiens (Human)).